The primary structure comprises 501 residues: ATP synthase subunit alpha (501 aa).

Position 169–176 (169–176 (GDRQTGKT)) interacts with ATP.

Belongs to the ATPase alpha/beta chains family. In terms of assembly, F-type ATPases have 2 components, CF(1) - the catalytic core - and CF(0) - the membrane proton channel. CF(1) has five subunits: alpha(3), beta(3), gamma(1), delta(1), epsilon(1). CF(0) has three main subunits: a(1), b(2) and c(9-12). The alpha and beta chains form an alternating ring which encloses part of the gamma chain. CF(1) is attached to CF(0) by a central stalk formed by the gamma and epsilon chains, while a peripheral stalk is formed by the delta and b chains.

The protein resides in the cell membrane. It catalyses the reaction ATP + H2O + 4 H(+)(in) = ADP + phosphate + 5 H(+)(out). Functionally, produces ATP from ADP in the presence of a proton gradient across the membrane. The alpha chain is a regulatory subunit. The protein is ATP synthase subunit alpha of Streptococcus agalactiae serotype III (strain NEM316).